The primary structure comprises 101 residues: Movement protein (101 aa).

A helical membrane pass occupies residues 30 to 50 (EVAILSFVALICIYLLYLWVL). Positions 80–101 (PIPNTLEPTAPVHPGPFVPGQG) are disordered. Positions 90–101 (PVHPGPFVPGQG) are enriched in pro residues.

The protein belongs to the mastrevirus movement protein family. As to quaternary structure, interacts with the capsid protein (CP). Part of a MP-CP-viral DNA complex.

The protein resides in the host membrane. Its function is as follows. Involved in the viral transport within, and between cells. This chain is Movement protein, found in Avena sativa (Oat).